The following is a 219-amino-acid chain: 2-hydroxy-3-keto-5-methylthiopentenyl-1-phosphate phosphatase (219 aa).

The protein belongs to the HAD-like hydrolase superfamily. MtnX family.

It carries out the reaction 2-hydroxy-5-methylsulfanyl-3-oxopent-1-enyl phosphate + H2O = 1,2-dihydroxy-5-(methylsulfanyl)pent-1-en-3-one + phosphate. It participates in amino-acid biosynthesis; L-methionine biosynthesis via salvage pathway; L-methionine from S-methyl-5-thio-alpha-D-ribose 1-phosphate: step 4/6. Functionally, dephosphorylates 2-hydroxy-3-keto-5-methylthiopentenyl-1-phosphate (HK-MTPenyl-1-P) yielding 1,2-dihydroxy-3-keto-5-methylthiopentene (DHK-MTPene). The sequence is that of 2-hydroxy-3-keto-5-methylthiopentenyl-1-phosphate phosphatase from Bacillus cereus (strain G9842).